Reading from the N-terminus, the 232-residue chain is Large ribosomal subunit protein uL1 (232 aa).

This sequence belongs to the universal ribosomal protein uL1 family. In terms of assembly, part of the 50S ribosomal subunit.

Functionally, binds directly to 23S rRNA. The L1 stalk is quite mobile in the ribosome, and is involved in E site tRNA release. Its function is as follows. Protein L1 is also a translational repressor protein, it controls the translation of the L11 operon by binding to its mRNA. The protein is Large ribosomal subunit protein uL1 of Xylella fastidiosa (strain 9a5c).